A 276-amino-acid polypeptide reads, in one-letter code: 2-dehydro-3-deoxyphosphooctonate aldolase (276 aa).

The protein belongs to the KdsA family.

It localises to the cytoplasm. The catalysed reaction is D-arabinose 5-phosphate + phosphoenolpyruvate + H2O = 3-deoxy-alpha-D-manno-2-octulosonate-8-phosphate + phosphate. It participates in carbohydrate biosynthesis; 3-deoxy-D-manno-octulosonate biosynthesis; 3-deoxy-D-manno-octulosonate from D-ribulose 5-phosphate: step 2/3. Its pathway is bacterial outer membrane biogenesis; lipopolysaccharide biosynthesis. The chain is 2-dehydro-3-deoxyphosphooctonate aldolase from Stenotrophomonas maltophilia (strain R551-3).